The sequence spans 232 residues: Ribonuclease 3 (232 aa).

In terms of domain architecture, RNase III spans 5–134; that stretch reads NDAISKIIDY…LIGAIYIDGG (130 aa). Glu47 lines the Mg(2+) pocket. Asp51 is an active-site residue. Mg(2+) contacts are provided by Asn120 and Glu123. Residue Glu123 is part of the active site. The region spanning 159 to 228 is the DRBM domain; sequence DPKTSLQEWT…AELMLEKIGK (70 aa).

This sequence belongs to the ribonuclease III family. As to quaternary structure, homodimer. It depends on Mg(2+) as a cofactor.

It localises to the cytoplasm. It carries out the reaction Endonucleolytic cleavage to 5'-phosphomonoester.. Its function is as follows. Digests double-stranded RNA. Involved in the processing of primary rRNA transcript to yield the immediate precursors to the large and small rRNAs (23S and 16S). Processes some mRNAs, and tRNAs when they are encoded in the rRNA operon. Processes pre-crRNA and tracrRNA of type II CRISPR loci if present in the organism. This Wolbachia pipientis wMel protein is Ribonuclease 3.